Consider the following 249-residue polypeptide: ATP synthase subunit a (249 aa).

Helical transmembrane passes span 30–50 (SAYM…GVAG), 84–104 (FFPL…VGII), 114–134 (LIVT…YGFY), 143–163 (IFVP…IEVF), 196–216 (LLAG…GMVI), and 221–241 (LELL…CIYL).

Belongs to the ATPase A chain family. F-type ATPases have 2 components, CF(1) - the catalytic core - and CF(0) - the membrane proton channel. CF(1) has five subunits: alpha(3), beta(3), gamma(1), delta(1), epsilon(1). CF(0) has four main subunits: a, b, b' and c.

The protein localises to the cell inner membrane. In terms of biological role, key component of the proton channel; it plays a direct role in the translocation of protons across the membrane. This chain is ATP synthase subunit a, found in Rhodopseudomonas palustris (strain BisB18).